The following is a 472-amino-acid chain: uncharacterized protein (472 aa).

Belongs to the IIV-6 198R family.

This is an uncharacterized protein from Acheta domesticus (House cricket).